Here is a 95-residue protein sequence, read N- to C-terminus: MNLKPLADRVIVKPAPAEEKTKGGLYIPDTGKEKPMYGEVVAVGAGKMSDSGQLLEMPVKAGDKVLYGKYSGTEVSVEGEDYLIMRESDIFAILG.

Belongs to the GroES chaperonin family. Heptamer of 7 subunits arranged in a ring. Interacts with the chaperonin GroEL.

The protein resides in the cytoplasm. Its function is as follows. Together with the chaperonin GroEL, plays an essential role in assisting protein folding. The GroEL-GroES system forms a nano-cage that allows encapsulation of the non-native substrate proteins and provides a physical environment optimized to promote and accelerate protein folding. GroES binds to the apical surface of the GroEL ring, thereby capping the opening of the GroEL channel. This chain is Co-chaperonin GroES, found in Chlorobium phaeovibrioides (strain DSM 265 / 1930) (Prosthecochloris vibrioformis (strain DSM 265)).